The primary structure comprises 392 residues: Formate-dependent phosphoribosylglycinamide formyltransferase (392 aa).

N(1)-(5-phospho-beta-D-ribosyl)glycinamide is bound by residues 22 to 23 and Glu82; that span reads EL. Residues Arg114, Lys155, 160–165, 195–198, and Glu203 contribute to the ATP site; these read SSGKGQ and EGVV. Residues 119–308 enclose the ATP-grasp domain; the sequence is RLAAEELGLP…EFALHVRAFL (190 aa). Residues Glu267 and Glu279 each contribute to the Mg(2+) site. Residues Asp286, Lys355, and 362–363 each bind N(1)-(5-phospho-beta-D-ribosyl)glycinamide; that span reads RR.

The protein belongs to the PurK/PurT family. In terms of assembly, homodimer.

The enzyme catalyses N(1)-(5-phospho-beta-D-ribosyl)glycinamide + formate + ATP = N(2)-formyl-N(1)-(5-phospho-beta-D-ribosyl)glycinamide + ADP + phosphate + H(+). Its pathway is purine metabolism; IMP biosynthesis via de novo pathway; N(2)-formyl-N(1)-(5-phospho-D-ribosyl)glycinamide from N(1)-(5-phospho-D-ribosyl)glycinamide (formate route): step 1/1. Involved in the de novo purine biosynthesis. Catalyzes the transfer of formate to 5-phospho-ribosyl-glycinamide (GAR), producing 5-phospho-ribosyl-N-formylglycinamide (FGAR). Formate is provided by PurU via hydrolysis of 10-formyl-tetrahydrofolate. This is Formate-dependent phosphoribosylglycinamide formyltransferase from Salmonella dublin (strain CT_02021853).